Here is a 323-residue protein sequence, read N- to C-terminus: L-lactate dehydrogenase 1 (323 aa).

NAD(+) is bound by residues Val-17, Asp-38, Arg-43, Tyr-68, and 82-83; that span reads GA. Gln-85 and Arg-91 together coordinate substrate. NAD(+)-binding positions include Ser-104, 121–123, and Ser-146; that span reads AAN. Residue 123–126 participates in substrate binding; sequence NPVD. 151 to 154 lines the substrate pocket; the sequence is DTGR. The active-site Proton acceptor is the His-178. The residue at position 223 (Tyr-223) is a Phosphotyrosine. A substrate-binding site is contributed by Thr-232.

Belongs to the LDH/MDH superfamily. LDH family. As to quaternary structure, homotetramer.

Its subcellular location is the cytoplasm. It catalyses the reaction (S)-lactate + NAD(+) = pyruvate + NADH + H(+). The protein operates within fermentation; pyruvate fermentation to lactate; (S)-lactate from pyruvate: step 1/1. Functionally, catalyzes the conversion of lactate to pyruvate. The protein is L-lactate dehydrogenase 1 of Lactobacillus johnsonii (strain CNCM I-12250 / La1 / NCC 533).